The sequence spans 226 residues: Lipoprotein signal peptidase (226 aa).

Transmembrane regions (helical) follow at residues 12–32 (KVVAALIVLLLVVDQVIKIWV), 69–89 (FLSLFRIVAMGFCIYLLAKLV), and 103–123 (SLIIAGGIGNIIDSIFYGVIF). Residues Asp150 and Asp184 contribute to the active site. A helical transmembrane segment spans residues 173-193 (FVFFHPVFNFADSCISIGLIL).

It belongs to the peptidase A8 family.

The protein localises to the cell inner membrane. It carries out the reaction Release of signal peptides from bacterial membrane prolipoproteins. Hydrolyzes -Xaa-Yaa-Zaa-|-(S,diacylglyceryl)Cys-, in which Xaa is hydrophobic (preferably Leu), and Yaa (Ala or Ser) and Zaa (Gly or Ala) have small, neutral side chains.. The protein operates within protein modification; lipoprotein biosynthesis (signal peptide cleavage). Functionally, this protein specifically catalyzes the removal of signal peptides from prolipoproteins. This chain is Lipoprotein signal peptidase, found in Porphyromonas gingivalis (strain ATCC 33277 / DSM 20709 / CIP 103683 / JCM 12257 / NCTC 11834 / 2561).